The primary structure comprises 343 residues: Homeobox-leucine zipper protein HOX16 (343 aa).

Positions 74–133 (LPEKKRRLTPEQVHLLERSFEEENKLEPERKTELARKLGLQPRQVAVWFQNRRARWKTKQ) form a DNA-binding region, homeobox. Positions 132 to 176 (KQLERDFDRLKASFDALRADHDALLQDNHRLHSQVMSLTEKLQEK) are leucine-zipper. The interval 218–239 (FEEQQEQQVKAEDRLSTGSGGS) is disordered.

It belongs to the HD-ZIP homeobox family. Class I subfamily. As to expression, expressed in seedlings, stems, leaf sheaths and blades and panicles.

It is found in the nucleus. Probable transcription factor. This chain is Homeobox-leucine zipper protein HOX16 (HOX16), found in Oryza sativa subsp. japonica (Rice).